The sequence spans 231 residues: Large ribosomal subunit protein uL1 (231 aa).

It belongs to the universal ribosomal protein uL1 family. Part of the 50S ribosomal subunit.

In terms of biological role, binds directly to 23S rRNA. The L1 stalk is quite mobile in the ribosome, and is involved in E site tRNA release. Its function is as follows. Protein L1 is also a translational repressor protein, it controls the translation of the L11 operon by binding to its mRNA. The chain is Large ribosomal subunit protein uL1 from Cupriavidus pinatubonensis (strain JMP 134 / LMG 1197) (Cupriavidus necator (strain JMP 134)).